We begin with the raw amino-acid sequence, 194 residues long: 13S globulin basic chain (194 aa).

Positions 13-162 (ENIKSPQEAD…SFQISSEEAE (150 aa)) constitute a Cupin type-1 domain.

It belongs to the 11S seed storage protein (globulins) family. As to quaternary structure, hexamer; each subunit is composed of an acidic and a basic chain derived from a single precursor and linked by a disulfide bond. As to expression, cotyledons and endosperm protein bodies.

Functionally, seed storage protein with a relatively high level of Lys and Met. This chain is 13S globulin basic chain, found in Fagopyrum esculentum (Common buckwheat).